The chain runs to 366 residues: tRNA (guanine(26)-N(2))-dimethyltransferase (366 aa).

Residues Met-1–Phe-28 are disordered. A Trm1 methyltransferase domain is found at Met-1 to Val-365. S-adenosyl-L-methionine contacts are provided by Arg-37, Arg-64, and Asp-79. The Zn(2+) site is built by Cys-234, Cys-237, Cys-254, and Cys-257.

The protein belongs to the class I-like SAM-binding methyltransferase superfamily. Trm1 family.

The catalysed reaction is guanosine(26) in tRNA + 2 S-adenosyl-L-methionine = N(2)-dimethylguanosine(26) in tRNA + 2 S-adenosyl-L-homocysteine + 2 H(+). Its function is as follows. Dimethylates a single guanine residue at position 26 of a number of tRNAs using S-adenosyl-L-methionine as donor of the methyl groups. The sequence is that of tRNA (guanine(26)-N(2))-dimethyltransferase from Natronomonas pharaonis (strain ATCC 35678 / DSM 2160 / CIP 103997 / JCM 8858 / NBRC 14720 / NCIMB 2260 / Gabara) (Halobacterium pharaonis).